Here is a 589-residue protein sequence, read N- to C-terminus: Poly(3-hydroxyalkanoate) polymerase subunit PhaC (589 aa).

A disordered region spans residues 1 to 23; it reads MATGKGAAASTQEGKSQPFKVTP. Cys319 is a catalytic residue.

It belongs to the PHA/PHB synthase family. Type I PhaC subfamily. Monomer.

It is found in the cytoplasm. The enzyme catalyses (3R)-3-hydroxybutanoyl-CoA + [(3R)-hydroxybutanoate](n) = [(3R)-hydroxybutanoate](n+1) + CoA. The protein operates within biopolymer metabolism; poly-(R)-3-hydroxybutanoate biosynthesis. In terms of biological role, polymerizes (R)-3-hydroxybutyryl-CoA to create polyhydroxybutyrate (PHB) which consists of thousands of hydroxybutyrate molecules linked end to end. PHB serves as an intracellular energy reserve material when cells grow under conditions of nutrient limitation. The protein is Poly(3-hydroxyalkanoate) polymerase subunit PhaC of Cupriavidus necator (strain ATCC 17699 / DSM 428 / KCTC 22496 / NCIMB 10442 / H16 / Stanier 337) (Ralstonia eutropha).